Here is a 744-residue protein sequence, read N- to C-terminus: 1,4-alpha-glucan branching enzyme GlgB (744 aa).

A disordered region spans residues 1–23 (MSGPEDPADRRHGEVPAPRRDIP). Positions 7-23 (PADRRHGEVPAPRRDIP) are enriched in basic and acidic residues. The Nucleophile role is filled by Asp424. Catalysis depends on Glu476, which acts as the Proton donor.

The protein belongs to the glycosyl hydrolase 13 family. GlgB subfamily. In terms of assembly, monomer.

It catalyses the reaction Transfers a segment of a (1-&gt;4)-alpha-D-glucan chain to a primary hydroxy group in a similar glucan chain.. It participates in glycan biosynthesis; glycogen biosynthesis. Functionally, catalyzes the formation of the alpha-1,6-glucosidic linkages in glycogen by scission of a 1,4-alpha-linked oligosaccharide from growing alpha-1,4-glucan chains and the subsequent attachment of the oligosaccharide to the alpha-1,6 position. In Nocardia farcinica (strain IFM 10152), this protein is 1,4-alpha-glucan branching enzyme GlgB.